Reading from the N-terminus, the 391-residue chain is Cathepsin E (391 aa).

The N-terminal stretch at 1–19 (MKTFLLLLLVLLELGQAPG) is a signal peptide. Positions 20–53 (ALHRVPLSRRESLRKKLRAQGQLTELWKSQNLNM) are cleaved as a propeptide — activation peptide. The Peptidase A1 domain maps to 74–387 (YFGTISIGSP…DRGNNRVGLA (314 aa)). Residue N86 is glycosylated (N-linked (GlcNAc...) asparagine). D92 is a catalytic residue. 2 disulfides stabilise this stretch: C105-C110 and C267-C271. D276 is an active-site residue. C309 and C346 form a disulfide bridge.

Belongs to the peptidase A1 family. As to quaternary structure, homodimer; disulfide-linked. In terms of processing, glycosylated. The nature of the carbohydrate chain varies between cell types. In terms of tissue distribution, expressed abundantly in the surface and foveolar epithelial cells of the fundic and pyloric stomach mucosa, and at very low levels in the spleen.

It is found in the endosome. It carries out the reaction Similar to cathepsin D, but slightly broader specificity.. May have a role in immune function. Probably involved in the processing of antigenic peptides during MHC class II-mediated antigen presentation. May play a role in activation-induced lymphocyte depletion in the thymus, and in neuronal degeneration and glial cell activation in the brain. The polypeptide is Cathepsin E (CTSE) (Cavia porcellus (Guinea pig)).